The chain runs to 312 residues: Elongation factor Ts (312 aa).

Positions 84-87 are involved in Mg(2+) ion dislocation from EF-Tu; sequence TDFV.

Belongs to the EF-Ts family.

The protein localises to the cytoplasm. Functionally, associates with the EF-Tu.GDP complex and induces the exchange of GDP to GTP. It remains bound to the aminoacyl-tRNA.EF-Tu.GTP complex up to the GTP hydrolysis stage on the ribosome. The protein is Elongation factor Ts of Caulobacter vibrioides (strain ATCC 19089 / CIP 103742 / CB 15) (Caulobacter crescentus).